A 253-amino-acid polypeptide reads, in one-letter code: Allene oxide cyclase 2, chloroplastic (253 aa).

A chloroplast-targeting transit peptide spans 1–77 (MASSAVSLQS…SQNGNIENPR (77 aa)).

The protein belongs to the allene oxide cyclase family. In terms of tissue distribution, highly expressed in fully developed leaves.

It localises to the plastid. The protein resides in the chloroplast. It carries out the reaction (9Z,13S,15Z)-12,13-epoxyoctadeca-9,11,15-trienoate = (9S,13S,15Z)-12-oxophyto-10,15-dienoate. Functionally, involved in the production of 12-oxo-phytodienoic acid (OPDA), a precursor of jasmonic acid. The sequence is that of Allene oxide cyclase 2, chloroplastic (AOC2) from Arabidopsis thaliana (Mouse-ear cress).